The sequence spans 469 residues: Signal recognition particle 54 kDa protein (469 aa).

GTP is bound by residues 104 to 111, 184 to 188, and 242 to 245; these read GLYGSGKT, DTAGR, and TKLD. Disordered stretches follow at residues 388–410 and 447–469; these read ELENPRVVGQSRTKRICRGSGKP and QQGGGGGGGMGGMGGGGMGPFGD. Residues 448-469 show a composition bias toward gly residues; the sequence is QGGGGGGGMGGMGGGGMGPFGD.

It belongs to the GTP-binding SRP family. SRP54 subfamily. Part of the signal recognition particle protein translocation system, which is composed of SRP and FtsY. Archaeal SRP consists of a 7S RNA molecule of 300 nucleotides and two protein subunits: SRP54 and SRP19.

The protein resides in the cytoplasm. It carries out the reaction GTP + H2O = GDP + phosphate + H(+). In terms of biological role, involved in targeting and insertion of nascent membrane proteins into the cytoplasmic membrane. Binds to the hydrophobic signal sequence of the ribosome-nascent chain (RNC) as it emerges from the ribosomes. The SRP-RNC complex is then targeted to the cytoplasmic membrane where it interacts with the SRP receptor FtsY. This is Signal recognition particle 54 kDa protein from Haloarcula marismortui (strain ATCC 43049 / DSM 3752 / JCM 8966 / VKM B-1809) (Halobacterium marismortui).